A 348-amino-acid chain; its full sequence is tRNA N6-adenosine threonylcarbamoyltransferase (348 aa).

Fe cation is bound by residues histidine 116 and histidine 120. Substrate-binding positions include 138-142 (QVSGG), aspartate 171, glycine 184, aspartate 188, and asparagine 277. A Fe cation-binding site is contributed by aspartate 309.

It belongs to the KAE1 / TsaD family. The cofactor is Fe(2+).

The protein resides in the cytoplasm. It carries out the reaction L-threonylcarbamoyladenylate + adenosine(37) in tRNA = N(6)-L-threonylcarbamoyladenosine(37) in tRNA + AMP + H(+). Required for the formation of a threonylcarbamoyl group on adenosine at position 37 (t(6)A37) in tRNAs that read codons beginning with adenine. Is involved in the transfer of the threonylcarbamoyl moiety of threonylcarbamoyl-AMP (TC-AMP) to the N6 group of A37, together with TsaE and TsaB. TsaD likely plays a direct catalytic role in this reaction. This chain is tRNA N6-adenosine threonylcarbamoyltransferase, found in Lactobacillus gasseri (strain ATCC 33323 / DSM 20243 / BCRC 14619 / CIP 102991 / JCM 1131 / KCTC 3163 / NCIMB 11718 / NCTC 13722 / AM63).